The sequence spans 161 residues: MNPRRKKRLGLILALFVGISATVGLMLYALNQNMDLFYTPTELVNGKPDGTKPEVGQRLRIGGMVVAGSVVRDNNSLEVSFKVADVGPQVTVIYDGILPDLFREGQGIVAQGVLVDATTIKAHEVLAKHDEEYMPPEVAEAMKKTHEPLQYTEQQKQGTGQ.

Topologically, residues 1–8 (MNPRRKKR) are cytoplasmic. Residues 9 to 29 (LGLILALFVGISATVGLMLYA) form a helical; Signal-anchor for type II membrane protein membrane-spanning segment. The Periplasmic segment spans residues 30-161 (LNQNMDLFYT…TEQQKQGTGQ (132 aa)). Residues H129 and Y133 each contribute to the heme site. The tract at residues 142–161 (MKKTHEPLQYTEQQKQGTGQ) is disordered. Residues 151–161 (YTEQQKQGTGQ) are compositionally biased toward polar residues.

This sequence belongs to the CcmE/CycJ family.

Its subcellular location is the cell inner membrane. Functionally, heme chaperone required for the biogenesis of c-type cytochromes. Transiently binds heme delivered by CcmC and transfers the heme to apo-cytochromes in a process facilitated by CcmF and CcmH. The chain is Cytochrome c-type biogenesis protein CcmE from Aliivibrio fischeri (strain ATCC 700601 / ES114) (Vibrio fischeri).